The following is a 195-amino-acid chain: Imidazoleglycerol-phosphate dehydratase (195 aa).

It belongs to the imidazoleglycerol-phosphate dehydratase family.

Its subcellular location is the cytoplasm. The catalysed reaction is D-erythro-1-(imidazol-4-yl)glycerol 3-phosphate = 3-(imidazol-4-yl)-2-oxopropyl phosphate + H2O. It participates in amino-acid biosynthesis; L-histidine biosynthesis; L-histidine from 5-phospho-alpha-D-ribose 1-diphosphate: step 6/9. This Haloarcula marismortui (strain ATCC 43049 / DSM 3752 / JCM 8966 / VKM B-1809) (Halobacterium marismortui) protein is Imidazoleglycerol-phosphate dehydratase.